The following is a 452-amino-acid chain: Chaperone SurA (452 aa).

The N-terminal stretch at 1-28 (MKKTLRFAAVVSSLAAASALLAAAPAAA) is a signal peptide. 2 PpiC domains span residues 186–288 (QQDL…RLVD) and 302–400 (IVQT…QVLS).

It localises to the periplasm. It carries out the reaction [protein]-peptidylproline (omega=180) = [protein]-peptidylproline (omega=0). Functionally, chaperone involved in the correct folding and assembly of outer membrane proteins. Recognizes specific patterns of aromatic residues and the orientation of their side chains, which are found more frequently in integral outer membrane proteins. May act in both early periplasmic and late outer membrane-associated steps of protein maturation. This is Chaperone SurA from Burkholderia lata (strain ATCC 17760 / DSM 23089 / LMG 22485 / NCIMB 9086 / R18194 / 383).